Here is a 416-residue protein sequence, read N- to C-terminus: Serine hydroxymethyltransferase (416 aa).

Residues L118 and 122 to 124 contribute to the (6S)-5,6,7,8-tetrahydrofolate site; that span reads GHL. The residue at position 226 (K226) is an N6-(pyridoxal phosphate)lysine. Residue 350-352 coordinates (6S)-5,6,7,8-tetrahydrofolate; the sequence is SPF.

This sequence belongs to the SHMT family. In terms of assembly, homodimer. Pyridoxal 5'-phosphate is required as a cofactor.

It localises to the cytoplasm. The enzyme catalyses (6R)-5,10-methylene-5,6,7,8-tetrahydrofolate + glycine + H2O = (6S)-5,6,7,8-tetrahydrofolate + L-serine. It functions in the pathway one-carbon metabolism; tetrahydrofolate interconversion. The protein operates within amino-acid biosynthesis; glycine biosynthesis; glycine from L-serine: step 1/1. In terms of biological role, catalyzes the reversible interconversion of serine and glycine with tetrahydrofolate (THF) serving as the one-carbon carrier. This reaction serves as the major source of one-carbon groups required for the biosynthesis of purines, thymidylate, methionine, and other important biomolecules. Also exhibits THF-independent aldolase activity toward beta-hydroxyamino acids, producing glycine and aldehydes, via a retro-aldol mechanism. The protein is Serine hydroxymethyltransferase of Sulfurovum sp. (strain NBC37-1).